The primary structure comprises 240 residues: Cysteine-rich venom protein catrin (240 aa).

The signal sequence occupies residues 1–19 (MIAFIVLPILAAVLQQSSG). Residues 38–166 (VDLHNFLRRS…KYSYFYVCQY (129 aa)) form the SCP domain. 8 disulfides stabilise this stretch: Cys75/Cys153, Cys92/Cys167, Cys148/Cys164, Cys186/Cys193, Cys189/Cys198, Cys202/Cys235, Cys211/Cys229, and Cys220/Cys233. The ShKT domain occupies 202–235 (CTKEDKYTNCKSLVQQAGCQDKQMQSDCPAICFC).

The protein belongs to the CRISP family. In terms of tissue distribution, expressed by the venom gland.

Its subcellular location is the secreted. In terms of biological role, catrin-2 weakly blocks contraction of smooth muscle elicited by high potassium-induced depolarization, but does not block caffeine-stimulated contraction. Catrin-1 has no significant effect. May target voltage-gated calcium channels on smooth muscle. This chain is Cysteine-rich venom protein catrin, found in Crotalus atrox (Western diamondback rattlesnake).